The primary structure comprises 88 residues: Small ribosomal subunit protein bS16c (88 aa).

It belongs to the bacterial ribosomal protein bS16 family.

It is found in the plastid. The protein localises to the chloroplast. The sequence is that of Small ribosomal subunit protein bS16c from Gossypium barbadense (Sea Island cotton).